A 456-amino-acid polypeptide reads, in one-letter code: uncharacterized protein (456 aa).

The region spanning 3–61 is the TRAM domain; sequence TIKKNEVKTGKVIDLTHEGHGVVKVDRYPIFIPNALIDEEIKFKLIKVKKNFAIGKLIE. Residues Cys-74, Cys-80, Cys-83, and Cys-162 each coordinate [4Fe-4S] cluster. S-adenosyl-L-methionine-binding residues include Gln-286, Tyr-315, Glu-336, and Asp-384. Cys-411 acts as the Nucleophile in catalysis.

This sequence belongs to the class I-like SAM-binding methyltransferase superfamily. RNA M5U methyltransferase family.

This is an uncharacterized protein from Staphylococcus epidermidis (strain ATCC 12228 / FDA PCI 1200).